Here is a 106-residue protein sequence, read N- to C-terminus: UPF0145 protein VC_A0951 (106 aa).

Belongs to the UPF0145 family.

In Vibrio cholerae serotype O1 (strain ATCC 39315 / El Tor Inaba N16961), this protein is UPF0145 protein VC_A0951.